Consider the following 304-residue polypeptide: Arginine-binding protein ArgT (304 aa).

The signal sequence occupies residues 1-26 (MRFPKIPKRAVAATVGIVATSFTLAS). Cysteine 27 carries N-palmitoyl cysteine lipidation. Cysteine 27 is lipidated: S-diacylglycerol cysteine.

The protein belongs to the bacterial solute-binding protein 3 family. As to quaternary structure, the complex is probably composed of two ATP-binding proteins (ArgV), two transmembrane proteins (ArgU) and a solute-binding protein (ArgT).

The protein resides in the cell membrane. Part of the ABC transporter complex ArgTUV involved in L-arginine import. May also transport L-citrulline. Binds L-arginine and its molecular precursor L-citrulline, but not L-histidine, L-glutamate, L-glutamine, L-lysine or L-cysteine. This Corynebacterium glutamicum (strain ATCC 13032 / DSM 20300 / JCM 1318 / BCRC 11384 / CCUG 27702 / LMG 3730 / NBRC 12168 / NCIMB 10025 / NRRL B-2784 / 534) protein is Arginine-binding protein ArgT.